Consider the following 300-residue polypeptide: N-acetylmuramic acid 6-phosphate etherase (300 aa).

An SIS domain is found at 57 to 220 (VSAAFARQGR…SSAAMIRSGK (164 aa)). Catalysis depends on Glu85, which acts as the Proton donor. Glu116 is a catalytic residue.

It belongs to the GCKR-like family. MurNAc-6-P etherase subfamily. As to quaternary structure, homodimer.

It carries out the reaction N-acetyl-D-muramate 6-phosphate + H2O = N-acetyl-D-glucosamine 6-phosphate + (R)-lactate. Its pathway is amino-sugar metabolism; N-acetylmuramate degradation. It participates in amino-sugar metabolism; 1,6-anhydro-N-acetylmuramate degradation. The protein operates within cell wall biogenesis; peptidoglycan recycling. In terms of biological role, specifically catalyzes the cleavage of the D-lactyl ether substituent of MurNAc 6-phosphate, producing GlcNAc 6-phosphate and D-lactate. Together with AnmK, is also required for the utilization of anhydro-N-acetylmuramic acid (anhMurNAc) either imported from the medium or derived from its own cell wall murein, and thus plays a role in cell wall recycling. This Edwardsiella ictaluri (strain 93-146) protein is N-acetylmuramic acid 6-phosphate etherase.